The chain runs to 77 residues: VpAmp2.0 (77 aa).

The N-terminal stretch at 1 to 23 (MQLRKALLVIFVAYLLVTDEAEA) is a signal peptide. The propeptide occupies 49–77 (RKREIEDLFDPYQKDLDLQRLDRFFSQFQ).

The protein belongs to the non-disulfide-bridged peptide (NDBP) superfamily. Medium-length antimicrobial peptide (group 3) family. In terms of tissue distribution, expressed by the venom gland.

Its subcellular location is the secreted. It localises to the target cell membrane. Its function is as follows. Antimicrobial peptide with potent activity against Gram-positive bacteria S.aureus (MIC=10 uM) and S.agalactiaea (MIC=15 uM), and Gram-negative bacteria E.coli (MIC=24 uM) and P.aeruginosa (MIC=15 uM), as well as against yeasts Candida albicans (MIC=3.1 uM) and C.glabrata (MIC=25 uM). Also elicits low hemolysis on human erythrocytes (HC(50)=167 uM). The protein is VpAmp2.0 of Mesomexovis punctatus (Scorpion).